Here is a 348-residue protein sequence, read N- to C-terminus: Thioredoxin-related protein DsbJ (348 aa).

The first 32 residues, Met1–Ala32, serve as a signal peptide directing secretion.

It localises to the periplasm. This chain is Thioredoxin-related protein DsbJ (dsbJ), found in Chlamydia pneumoniae (Chlamydophila pneumoniae).